The primary structure comprises 502 residues: Maturase K (502 aa).

The protein belongs to the intron maturase 2 family. MatK subfamily.

It localises to the plastid. It is found in the chloroplast. Its function is as follows. Usually encoded in the trnK tRNA gene intron. Probably assists in splicing its own and other chloroplast group II introns. Binds its homologous trnK precursor transcript. The protein is Maturase K of Sinapis alba (White mustard).